The sequence spans 207 residues: MRTIDKRIAPNVRLAATLVARAPALTLAYDARCKSRLAATLDTGEDVALVLPRGTVLRDGDVLVADDGALVRVAAAHEAVLLVRAPDALTLTRAAYHLGNRHTPVEVGAGCLKLEYDPVLADMLTRLGATVERASAPFQPEAGAYGGGHRHGHDATFAEDYALAQQVFDEHHGHSHSHSHDHDHDHDHDHDHQHGPCCSHGHHHGHR.

The span at 170–194 shows a compositional bias: basic and acidic residues; it reads EHHGHSHSHSHDHDHDHDHDHDHQH. The segment at 170–207 is disordered; it reads EHHGHSHSHSHDHDHDHDHDHDHQHGPCCSHGHHHGHR.

It belongs to the UreE family.

It is found in the cytoplasm. Involved in urease metallocenter assembly. Binds nickel. Probably functions as a nickel donor during metallocenter assembly. The polypeptide is Urease accessory protein UreE (Burkholderia pseudomallei (strain 1106a)).